The chain runs to 131 residues: ATP synthase epsilon chain (131 aa).

This sequence belongs to the ATPase epsilon chain family. As to quaternary structure, F-type ATPases have 2 components, CF(1) - the catalytic core - and CF(0) - the membrane proton channel. CF(1) has five subunits: alpha(3), beta(3), gamma(1), delta(1), epsilon(1). CF(0) has three main subunits: a, b and c.

The protein localises to the cell membrane. Functionally, produces ATP from ADP in the presence of a proton gradient across the membrane. The chain is ATP synthase epsilon chain from Bacillus pumilus (strain SAFR-032).